Reading from the N-terminus, the 117-residue chain is Large ribosomal subunit protein eL34 (117 aa).

Position 12 is a phosphoserine (S12). N6-acetyllysine is present on residues K36 and K43. K108 participates in a covalent cross-link: Glycyl lysine isopeptide (Lys-Gly) (interchain with G-Cter in SUMO2).

The protein belongs to the eukaryotic ribosomal protein eL34 family. In terms of assembly, component of the large ribosomal subunit.

It is found in the cytoplasm. The protein localises to the cytosol. The protein resides in the endoplasmic reticulum. Functionally, component of the large ribosomal subunit. The ribosome is a large ribonucleoprotein complex responsible for the synthesis of proteins in the cell. The polypeptide is Large ribosomal subunit protein eL34 (Rpl34) (Mus musculus (Mouse)).